Here is a 192-residue protein sequence, read N- to C-terminus: Phosphomevalonate kinase (192 aa).

ATP contacts are provided by residues 17–23 (KRKSGKD) and Arg141. Residue Asn170 participates in substrate binding. His171, Arg176, and Gln180 together coordinate ATP.

In terms of assembly, monomer. Heart, liver, skeletal muscle, kidney, and pancreas. Lower level in brain, placenta and lung.

It is found in the cytoplasm. Its subcellular location is the cytosol. The catalysed reaction is (R)-5-phosphomevalonate + ATP = (R)-5-diphosphomevalonate + ADP. It participates in isoprenoid biosynthesis; isopentenyl diphosphate biosynthesis via mevalonate pathway; isopentenyl diphosphate from (R)-mevalonate: step 2/3. Functionally, catalyzes the reversible ATP-dependent phosphorylation of mevalonate 5-phosphate to produce mevalonate diphosphate and ADP, a key step in the mevalonic acid mediated biosynthesis of isopentenyl diphosphate and other polyisoprenoid metabolites. In Homo sapiens (Human), this protein is Phosphomevalonate kinase (PMVK).